The sequence spans 387 residues: 2-deoxystreptamine glucosyltransferase (387 aa).

It belongs to the glycosyltransferase group 1 family.

The catalysed reaction is 2-deoxystreptamine + UDP-N-acetyl-alpha-D-glucosamine = 2'-N-acetylparomamine + UDP + H(+). It carries out the reaction 2-deoxystreptamine + UDP-alpha-D-glucose = 2'-deamino-2'-hydroxyparomamine + UDP + H(+). Its pathway is antibiotic biosynthesis; kanamycin biosynthesis. Functionally, glycosyltransferase involved in the biosynthesis of kanamycin by mediating conversion of 2-deoxystreptamine (2-DOS) to 2'-N-acetylparomamine using UDP-alpha-D-glucose as sugar donor. Can also accept UDP-alpha-D-glucosamine, but with a much lower activity compared to UDP-alpha-D-glucose. The sequence is that of 2-deoxystreptamine glucosyltransferase (kanF) from Streptomyces kanamyceticus.